The sequence spans 115 residues: MGTRLLFWVAFCLLGADHTGAGVSQSPSNKVTEKGKDVELRCDPISGHTALYWYRQSLGQGLEFLIYFQGNSAPDKSGLPSDRFSAERTGGSVSTLTIQRTQQEDSAVYLCASSL.

Residues 1–21 form the signal peptide; that stretch reads MGTRLLFWVAFCLLGADHTGA. The Ig-like domain occupies 22-115; sequence GVSQSPSNKV…SAVYLCASSL (94 aa). Cys-42 and Cys-111 form a disulfide bridge.

In terms of assembly, alpha-beta TR is a heterodimer composed of an alpha and beta chain; disulfide-linked. The alpha-beta TR is associated with the transmembrane signaling CD3 coreceptor proteins to form the TR-CD3 (TcR or TCR). The assembly of alpha-beta TR heterodimers with CD3 occurs in the endoplasmic reticulum where a single alpha-beta TR heterodimer associates with one CD3D-CD3E heterodimer, one CD3G-CD3E heterodimer and one CD247 homodimer forming a stable octameric structure. CD3D-CD3E and CD3G-CD3E heterodimers preferentially associate with TR alpha and TR beta chains, respectively. The association of the CD247 homodimer is the last step of TcR assembly in the endoplasmic reticulum and is required for transport to the cell surface.

The protein localises to the cell membrane. In terms of biological role, v region of the variable domain of T cell receptor (TR) beta chain that participates in the antigen recognition. Alpha-beta T cell receptors are antigen specific receptors which are essential to the immune response and are present on the cell surface of T lymphocytes. Recognize peptide-major histocompatibility (MH) (pMH) complexes that are displayed by antigen presenting cells (APC), a prerequisite for efficient T cell adaptive immunity against pathogens. Binding of alpha-beta TR to pMH complex initiates TR-CD3 clustering on the cell surface and intracellular activation of LCK that phosphorylates the ITAM motifs of CD3G, CD3D, CD3E and CD247 enabling the recruitment of ZAP70. In turn ZAP70 phosphorylates LAT, which recruits numerous signaling molecules to form the LAT signalosome. The LAT signalosome propagates signal branching to three major signaling pathways, the calcium, the mitogen-activated protein kinase (MAPK) kinase and the nuclear factor NF-kappa-B (NF-kB) pathways, leading to the mobilization of transcription factors that are critical for gene expression and essential for T cell growth and differentiation. The T cell repertoire is generated in the thymus, by V-(D)-J rearrangement. This repertoire is then shaped by intrathymic selection events to generate a peripheral T cell pool of self-MH restricted, non-autoaggressive T cells. Post-thymic interaction of alpha-beta TR with the pMH complexes shapes TR structural and functional avidity. The chain is T cell receptor beta variable 7-2 from Homo sapiens (Human).